Here is a 101-residue protein sequence, read N- to C-terminus: Capsid assembly scaffolding protein (101 aa).

The interval M1–E24 is disordered. Positions E79–A99 form a coiled coil.

This sequence belongs to the phi29likevirus scaffolding protein family. Homodimer. Interacts non-specifically with DNA; probably binds DNA in the early stages of DNA packaging.

Functionally, scaffolding protein involved in the icosahedric procapsid assembly. Coassembles with the capsid proteins to form the procapsid. The scaffolding protein is found within the capsid as a serie of concentric shells. During DNA packaging, the scaffolding protein molecules are released from the procapsid. In Bacillus subtilis (Bacteriophage B103), this protein is Capsid assembly scaffolding protein (7).